Here is a 272-residue protein sequence, read N- to C-terminus: NH(3)-dependent NAD(+) synthetase (272 aa).

43–50 contacts ATP; the sequence is GLSGGQDS. Asp-49 serves as a coordination point for Mg(2+). Arg-138 is a binding site for deamido-NAD(+). Thr-158 lines the ATP pocket. Glu-163 contributes to the Mg(2+) binding site. Residues Lys-171 and Asp-178 each coordinate deamido-NAD(+). Residues Lys-187 and Thr-209 each coordinate ATP. 258–259 contributes to the deamido-NAD(+) binding site; that stretch reads HK.

It belongs to the NAD synthetase family. As to quaternary structure, homodimer.

The enzyme catalyses deamido-NAD(+) + NH4(+) + ATP = AMP + diphosphate + NAD(+) + H(+). It functions in the pathway cofactor biosynthesis; NAD(+) biosynthesis; NAD(+) from deamido-NAD(+) (ammonia route): step 1/1. In terms of biological role, catalyzes the ATP-dependent amidation of deamido-NAD to form NAD. Uses ammonia as a nitrogen source. The protein is NH(3)-dependent NAD(+) synthetase of Halalkalibacterium halodurans (strain ATCC BAA-125 / DSM 18197 / FERM 7344 / JCM 9153 / C-125) (Bacillus halodurans).